A 243-amino-acid chain; its full sequence is Anti-H(O) lectin 2 (243 aa).

Asparagine 115 is a glycosylation site (N-linked (GlcNAc...) asparagine). Residues glutamate 127 and aspartate 129 each contribute to the Mn(2+) site. The Ca(2+) site is built by aspartate 129, asparagine 136, and aspartate 139. Residues aspartate 139 and histidine 144 each contribute to the Mn(2+) site.

The protein belongs to the leguminous lectin family. As to quaternary structure, homodimer.

Lactose- or galactose-binding anti-H(O) lectin. In Cytisophyllum sessilifolium (Sessile-leaved cytisus), this protein is Anti-H(O) lectin 2.